The sequence spans 215 residues: Cytochrome b6 (215 aa).

A helical transmembrane segment spans residues 32-52 (IFYCIGGITFTCFIMQVASGF). Cys-35 serves as a coordination point for heme c. Heme b-binding residues include His-86 and His-100. 3 consecutive transmembrane segments (helical) span residues 90–110 (ASMM…TGGF), 116–136 (LTWV…VTGY), and 186–206 (LHTF…FLMI). Residues His-187 and His-202 each contribute to the heme b site.

It belongs to the cytochrome b family. PetB subfamily. As to quaternary structure, the 4 large subunits of the cytochrome b6-f complex are cytochrome b6, subunit IV (17 kDa polypeptide, PetD), cytochrome f and the Rieske protein, while the 4 small subunits are PetG, PetL, PetM and PetN. The complex functions as a dimer. It depends on heme b as a cofactor. Heme c serves as cofactor.

Its subcellular location is the plastid. The protein resides in the chloroplast thylakoid membrane. Component of the cytochrome b6-f complex, which mediates electron transfer between photosystem II (PSII) and photosystem I (PSI), cyclic electron flow around PSI, and state transitions. The chain is Cytochrome b6 from Mesostigma viride (Green alga).